The sequence spans 120 residues: Immunoglobulin kappa variable 2-112 (120 aa).

The first 20 residues, M1–G20, serve as a signal peptide directing secretion. Residues D21–C43 form a framework-1 region. C43 and C113 are oxidised to a cystine. The interval R44–N59 is complementarity-determining-1. Residues W60–Y74 are framework-2. Residues L75–S81 form a complementarity-determining-2 region. The framework-3 stretch occupies residues G82–C113. The interval Q114 to P120 is complementarity-determining-3.

The polypeptide is Immunoglobulin kappa variable 2-112 (Mus musculus (Mouse)).